The following is a 454-amino-acid chain: Membrane-bound lytic murein transglycosylase F (454 aa).

The N-terminal stretch at 1–24 is a signal peptide; sequence MRRPLRRVTVVLLWVALAIGVAWF. A non-LT domain region spans residues 25-265; the sequence is YDYRRSMQSL…IYNRYYTAVD (241 aa). Residues 266 to 454 form an LT domain region; it reads TFDYVDVKKF…YDILKQKKAV (189 aa). E311 is an active-site residue.

The protein in the N-terminal section; belongs to the bacterial solute-binding protein 3 family. This sequence in the C-terminal section; belongs to the transglycosylase Slt family.

The protein localises to the cell outer membrane. The enzyme catalyses Exolytic cleavage of the (1-&gt;4)-beta-glycosidic linkage between N-acetylmuramic acid (MurNAc) and N-acetylglucosamine (GlcNAc) residues in peptidoglycan, from either the reducing or the non-reducing ends of the peptidoglycan chains, with concomitant formation of a 1,6-anhydrobond in the MurNAc residue.. In terms of biological role, murein-degrading enzyme that degrades murein glycan strands and insoluble, high-molecular weight murein sacculi, with the concomitant formation of a 1,6-anhydromuramoyl product. Lytic transglycosylases (LTs) play an integral role in the metabolism of the peptidoglycan (PG) sacculus. Their lytic action creates space within the PG sacculus to allow for its expansion as well as for the insertion of various structures such as secretion systems and flagella. The polypeptide is Membrane-bound lytic murein transglycosylase F (Desulfosudis oleivorans (strain DSM 6200 / JCM 39069 / Hxd3) (Desulfococcus oleovorans)).